Reading from the N-terminus, the 261-residue chain is MSLKKSPFFELRSGSVDTLLFTVKTTDLDALRAELVKRFEATPEFFADDVVAIDVRRLADGERVALADIRQMLNDVRMRPVGVVALATQGWAGEAGLPLLEARDRRAPAAKPADEAEPAAVPAVETAAAPAAAAAPEQPSEPAPTLVQAGGQTLVIDRPLRSGQQIYAKGDLVVLAPVSHGAEIIAEGNIHIYAPLRGRALAGVHGNHDARIFCTCLEPELISIAGIYRTTENPLPADVLGKSVQIRLEEEKLMIEPLRLT.

Residues 106–145 (RAPAAKPADEAEPAAVPAVETAAAPAAAAAPEQPSEPAPT) form a disordered region. Residues 118–144 (PAAVPAVETAAAPAAAAAPEQPSEPAP) show a composition bias toward low complexity.

The protein belongs to the MinC family. In terms of assembly, interacts with MinD and FtsZ.

Its function is as follows. Cell division inhibitor that blocks the formation of polar Z ring septums. Rapidly oscillates between the poles of the cell to destabilize FtsZ filaments that have formed before they mature into polar Z rings. Prevents FtsZ polymerization. The polypeptide is Probable septum site-determining protein MinC (Burkholderia orbicola (strain AU 1054)).